A 446-amino-acid polypeptide reads, in one-letter code: UDP-N-acetylmuramoylalanine--D-glutamate ligase (446 aa).

115-121 provides a ligand contact to ATP; that stretch reads GTNGKTT.

It belongs to the MurCDEF family.

The protein resides in the cytoplasm. It catalyses the reaction UDP-N-acetyl-alpha-D-muramoyl-L-alanine + D-glutamate + ATP = UDP-N-acetyl-alpha-D-muramoyl-L-alanyl-D-glutamate + ADP + phosphate + H(+). Its pathway is cell wall biogenesis; peptidoglycan biosynthesis. Cell wall formation. Catalyzes the addition of glutamate to the nucleotide precursor UDP-N-acetylmuramoyl-L-alanine (UMA). The chain is UDP-N-acetylmuramoylalanine--D-glutamate ligase from Trichlorobacter lovleyi (strain ATCC BAA-1151 / DSM 17278 / SZ) (Geobacter lovleyi).